The sequence spans 495 residues: Glutamate--tRNA ligase 1 (495 aa).

A 'HIGH' region motif is present at residues 10–20 (PSPTGALHMGG). The 'KMSKS' region signature appears at 251 to 255 (KLSKR). K254 is a binding site for ATP.

It belongs to the class-I aminoacyl-tRNA synthetase family. Glutamate--tRNA ligase type 1 subfamily. In terms of assembly, monomer.

It localises to the cytoplasm. It carries out the reaction tRNA(Glu) + L-glutamate + ATP = L-glutamyl-tRNA(Glu) + AMP + diphosphate. Its function is as follows. Catalyzes the attachment of glutamate to tRNA(Glu) in a two-step reaction: glutamate is first activated by ATP to form Glu-AMP and then transferred to the acceptor end of tRNA(Glu). This Syntrophomonas wolfei subsp. wolfei (strain DSM 2245B / Goettingen) protein is Glutamate--tRNA ligase 1.